A 205-amino-acid chain; its full sequence is Small ribosomal subunit protein uS4 (205 aa).

The span at 1–12 (MSKRVQAKHKLD) shows a compositional bias: basic residues. The interval 1–49 (MSKRVQAKHKLDRRMGQNIWGRPKSPVNRREYGPGQHGQRRKGKMSDFG) is disordered. Residues 94 to 155 (RRLDAVVYRS…ASRQLEIVVV (62 aa)) form the S4 RNA-binding domain.

The protein belongs to the universal ribosomal protein uS4 family. Part of the 30S ribosomal subunit. Contacts protein S5. The interaction surface between S4 and S5 is involved in control of translational fidelity.

Functionally, one of the primary rRNA binding proteins, it binds directly to 16S rRNA where it nucleates assembly of the body of the 30S subunit. With S5 and S12 plays an important role in translational accuracy. The polypeptide is Small ribosomal subunit protein uS4 (Methylorubrum populi (strain ATCC BAA-705 / NCIMB 13946 / BJ001) (Methylobacterium populi)).